We begin with the raw amino-acid sequence, 932 residues long: Beta-mannosidase A (932 aa).

The N-terminal stretch at Met-1–Pro-19 is a signal peptide. N-linked (GlcNAc...) asparagine glycans are attached at residues Asn-41, Asn-81, Asn-94, Asn-249, Asn-261, Asn-284, Asn-289, Asn-318, and Asn-348. The active-site Proton donor is Glu-480. N-linked (GlcNAc...) asparagine glycans are attached at residues Asn-538, Asn-551, Asn-609, Asn-624, Asn-632, Asn-659, Asn-739, and Asn-791.

The protein belongs to the glycosyl hydrolase 2 family. Beta-mannosidase A subfamily. In terms of assembly, homodimer.

The protein localises to the secreted. The enzyme catalyses Hydrolysis of terminal, non-reducing beta-D-mannose residues in beta-D-mannosides.. Its pathway is glycan metabolism; N-glycan degradation. Exoglycosidase that cleaves the single beta-linked mannose residue from the non-reducing end of beta-mannosidic oligosaccharides of various complexity and length. Involved in the degradation of polymeric mannan and galactomannan. The protein is Beta-mannosidase A (mndA) of Aspergillus terreus (strain NIH 2624 / FGSC A1156).